A 714-amino-acid chain; its full sequence is Fatty acid oxidation complex subunit alpha (714 aa).

The segment at 1-190 (MEMASAFTLN…KLGLVDDVVP (190 aa)) is enoyl-CoA hydratase. The tract at residues 306-714 (APLNSVGILG…FWKTTATDLQ (409 aa)) is 3-hydroxyacyl-CoA dehydrogenase.

The protein in the N-terminal section; belongs to the enoyl-CoA hydratase/isomerase family. In the central section; belongs to the 3-hydroxyacyl-CoA dehydrogenase family. In terms of assembly, heterotetramer of two alpha chains (FadJ) and two beta chains (FadI).

The protein resides in the cytoplasm. It catalyses the reaction a (3S)-3-hydroxyacyl-CoA = a (2E)-enoyl-CoA + H2O. The catalysed reaction is a 4-saturated-(3S)-3-hydroxyacyl-CoA = a (3E)-enoyl-CoA + H2O. The enzyme catalyses a (3S)-3-hydroxyacyl-CoA + NAD(+) = a 3-oxoacyl-CoA + NADH + H(+). It carries out the reaction (3S)-3-hydroxybutanoyl-CoA = (3R)-3-hydroxybutanoyl-CoA. Its pathway is lipid metabolism; fatty acid beta-oxidation. Functionally, catalyzes the formation of a hydroxyacyl-CoA by addition of water on enoyl-CoA. Also exhibits 3-hydroxyacyl-CoA epimerase and 3-hydroxyacyl-CoA dehydrogenase activities. The protein is Fatty acid oxidation complex subunit alpha of Escherichia coli O7:K1 (strain IAI39 / ExPEC).